Here is a 452-residue protein sequence, read N- to C-terminus: Peptidase M20 domain-containing protein SMAC_03666.2 (452 aa).

Positions 1-28 (MKATSNLLLLWGTSLLSPSSAFVIDNHH) are cleaved as a signal peptide. A glycan (N-linked (GlcNAc...) asparagine) is linked at asparagine 140. Aspartate 186 is a binding site for Zn(2+). The Proton acceptor role is filled by glutamate 220. Glutamate 221 serves as a coordination point for Zn(2+). A glycan (N-linked (GlcNAc...) asparagine) is linked at asparagine 315.

It belongs to the peptidase M20A family. It depends on Zn(2+) as a cofactor.

It localises to the secreted. The polypeptide is Peptidase M20 domain-containing protein SMAC_03666.2 (Sordaria macrospora (strain ATCC MYA-333 / DSM 997 / K(L3346) / K-hell)).